The chain runs to 213 residues: LexA repressor (213 aa).

Residues Val29–Glu49 constitute a DNA-binding region (H-T-H motif). Active-site for autocatalytic cleavage activity residues include Ser136 and Lys173.

Belongs to the peptidase S24 family. In terms of assembly, homodimer.

The catalysed reaction is Hydrolysis of Ala-|-Gly bond in repressor LexA.. Its function is as follows. Represses a number of genes involved in the response to DNA damage (SOS response), including recA and lexA. In the presence of single-stranded DNA, RecA interacts with LexA causing an autocatalytic cleavage which disrupts the DNA-binding part of LexA, leading to derepression of the SOS regulon and eventually DNA repair. This chain is LexA repressor, found in Acetivibrio thermocellus (strain ATCC 27405 / DSM 1237 / JCM 9322 / NBRC 103400 / NCIMB 10682 / NRRL B-4536 / VPI 7372) (Clostridium thermocellum).